Reading from the N-terminus, the 249-residue chain is NAD(P)H-quinone oxidoreductase subunit K (249 aa).

Residues Cys65, Cys66, Cys130, and Cys161 each contribute to the [4Fe-4S] cluster site.

It belongs to the complex I 20 kDa subunit family. In terms of assembly, NDH-1 can be composed of about 15 different subunits; different subcomplexes with different compositions have been identified which probably have different functions. [4Fe-4S] cluster is required as a cofactor.

The protein resides in the cellular thylakoid membrane. The enzyme catalyses a plastoquinone + NADH + (n+1) H(+)(in) = a plastoquinol + NAD(+) + n H(+)(out). The catalysed reaction is a plastoquinone + NADPH + (n+1) H(+)(in) = a plastoquinol + NADP(+) + n H(+)(out). Its function is as follows. NDH-1 shuttles electrons from an unknown electron donor, via FMN and iron-sulfur (Fe-S) centers, to quinones in the respiratory and/or the photosynthetic chain. The immediate electron acceptor for the enzyme in this species is believed to be plastoquinone. Couples the redox reaction to proton translocation, and thus conserves the redox energy in a proton gradient. Cyanobacterial NDH-1 also plays a role in inorganic carbon-concentration. The chain is NAD(P)H-quinone oxidoreductase subunit K from Prochlorococcus marinus (strain NATL2A).